Reading from the N-terminus, the 137-residue chain is Envelope glycoprotein L (137 aa).

The signal sequence occupies residues 1 to 25; it reads MRTVGVFLATCLVTIFVLPTWGNWA. Positions 23 to 128 are interaction with gH; the sequence is NWAYPCCHVT…SVEDLFGANL (106 aa). Intrachain disulfides connect Cys-28-Cys-56 and Cys-29-Cys-79.

It belongs to the herpesviridae glycoprotein L family. Interacts with glycoprotein H (gH); this interaction is necessary for the correct processing and cell surface expression of gH. The heterodimer gH/gL seems to interact with gB trimers during fusion. The heterodimer gH/gL interacts with host EPHA2 to facilitate virus internalization and fusion.

It localises to the virion membrane. Its subcellular location is the host cell membrane. The protein resides in the host Golgi apparatus. It is found in the host trans-Golgi network. The heterodimer glycoprotein H-glycoprotein L is required for the fusion of viral and plasma membranes leading to virus entry into the host cell. Acts as a functional inhibitor of gH and maintains gH in an inhibited form. Upon binding to host integrins, gL dissociates from gH leading to activation of the viral fusion glycoproteins gB and gH. The heterodimer gH/gL targets also host EPHA2 to promote viral entry. The chain is Envelope glycoprotein L from Epstein-Barr virus (strain AG876) (HHV-4).